Here is a 285-residue protein sequence, read N- to C-terminus: MNIVIALIPAVMWGIMPLVVSKIGGKPRQQIIGTTFGALAFAIGVFIFTNPEYTATIIIASFVSGAFWSLGQMNQFRAFTQVGVSKTMPLSTGMQLVGTSLFGVFAFHEWGTTSKLVLGFSALALIIIGIFLTSYQQHKDENSGQNMKKGIITLLISSVGYVGYVVITRWFDISGWDAILPQAIGMVVAGLLFSIKSEEKRFTKQTWLNMIPGVMWATGNLALLFSNKLVGIATGFSLSQMGVVISTIGGILFLGEKKTKKELILVIIGVVLVIIGGTMIGIAKS.

Helical transmembrane passes span 5–24 (IALI…SKIG), 31–48 (IIGT…VFIF), 53–71 (YTAT…WSLG), 84–106 (VSKT…GVFA), 116–135 (LVLG…LTSY), 151–173 (IITL…WFDI), 178–195 (AILP…LFSI), 207–226 (WLNM…LLFS), 232–254 (IATG…ILFL), and 263–282 (LILV…MIGI).

This sequence belongs to the GRP transporter (TC 2.A.7.5) family.

It localises to the cell membrane. This chain is Putative sugar uptake protein lmo0169, found in Listeria monocytogenes serovar 1/2a (strain ATCC BAA-679 / EGD-e).